The primary structure comprises 506 residues: Maturase K (506 aa).

It belongs to the intron maturase 2 family. MatK subfamily.

Its subcellular location is the plastid. The protein localises to the chloroplast. In terms of biological role, usually encoded in the trnK tRNA gene intron. Probably assists in splicing its own and other chloroplast group II introns. In Trifolium willdenovii (Tomcat clover), this protein is Maturase K.